Consider the following 123-residue polypeptide: uncharacterized protein (123 aa).

The 101-residue stretch at 17–117 folds into the Rhodanese domain; that stretch reads SNDNAFLVDV…NNQDKGWKQN (101 aa).

This is an uncharacterized protein from Rickettsia conorii (strain ATCC VR-613 / Malish 7).